A 124-amino-acid polypeptide reads, in one-letter code: Modulator protein MzrA (124 aa).

At 1-7 (MINRRMK) the chain is on the cytoplasmic side. The chain crosses the membrane as a helical span at residues 8-28 (TGFVFHLLLLLLPLVVLVTSS). Over 29–124 (RRTADDVTLH…KLSQQPFKLG (96 aa)) the chain is Periplasmic.

It belongs to the MzrA family. Interacts with EnvZ.

Its subcellular location is the cell inner membrane. Its function is as follows. Modulates the activity of the EnvZ/OmpR two-component regulatory system, probably by directly modulating EnvZ enzymatic activity and increasing stability of phosphorylated OmpR. The protein is Modulator protein MzrA of Musicola paradisiaca (strain Ech703) (Dickeya paradisiaca).